Consider the following 167-residue polypeptide: SsrA-binding protein (167 aa).

Residues 139-167 (QAHDKRHAEKEREWQRDKQRIMRAHNRNA) form a disordered region. The segment covering 144–158 (RHAEKEREWQRDKQR) has biased composition (basic and acidic residues).

This sequence belongs to the SmpB family.

The protein resides in the cytoplasm. Functionally, required for rescue of stalled ribosomes mediated by trans-translation. Binds to transfer-messenger RNA (tmRNA), required for stable association of tmRNA with ribosomes. tmRNA and SmpB together mimic tRNA shape, replacing the anticodon stem-loop with SmpB. tmRNA is encoded by the ssrA gene; the 2 termini fold to resemble tRNA(Ala) and it encodes a 'tag peptide', a short internal open reading frame. During trans-translation Ala-aminoacylated tmRNA acts like a tRNA, entering the A-site of stalled ribosomes, displacing the stalled mRNA. The ribosome then switches to translate the ORF on the tmRNA; the nascent peptide is terminated with the 'tag peptide' encoded by the tmRNA and targeted for degradation. The ribosome is freed to recommence translation, which seems to be the essential function of trans-translation. In Xylella fastidiosa (strain M23), this protein is SsrA-binding protein.